Reading from the N-terminus, the 132-residue chain is Small ribosomal subunit protein uS8 (132 aa).

It belongs to the universal ribosomal protein uS8 family. In terms of assembly, part of the 30S ribosomal subunit. Contacts proteins S5 and S12.

Functionally, one of the primary rRNA binding proteins, it binds directly to 16S rRNA central domain where it helps coordinate assembly of the platform of the 30S subunit. This Clostridioides difficile (strain 630) (Peptoclostridium difficile) protein is Small ribosomal subunit protein uS8.